The chain runs to 310 residues: Pirin-like protein At1g50590 (310 aa).

This sequence belongs to the pirin family.

The protein localises to the nucleus. The sequence is that of Pirin-like protein At1g50590 from Arabidopsis thaliana (Mouse-ear cress).